Consider the following 351-residue polypeptide: Ribosomal RNA large subunit methyltransferase N (351 aa).

Glu-92 acts as the Proton acceptor in catalysis. The Radical SAM core domain occupies 105-337 (GHPRSTICVS…CTVRVEKGTE (233 aa)). Residues Cys-112 and Cys-342 are joined by a disulfide bond. Positions 119, 123, and 126 each coordinate [4Fe-4S] cluster. Residues 169-170 (GE), Ser-201, 224-226 (SLH), and Asn-300 contribute to the S-adenosyl-L-methionine site. The S-methylcysteine intermediate role is filled by Cys-342.

The protein belongs to the radical SAM superfamily. RlmN family. The cofactor is [4Fe-4S] cluster.

It is found in the cytoplasm. It carries out the reaction adenosine(2503) in 23S rRNA + 2 reduced [2Fe-2S]-[ferredoxin] + 2 S-adenosyl-L-methionine = 2-methyladenosine(2503) in 23S rRNA + 5'-deoxyadenosine + L-methionine + 2 oxidized [2Fe-2S]-[ferredoxin] + S-adenosyl-L-homocysteine. Functionally, specifically methylates position 2 of adenine 2503 in 23S rRNA. This chain is Ribosomal RNA large subunit methyltransferase N, found in Nitrosopumilus maritimus (strain SCM1).